The following is an 878-amino-acid chain: Staphylococcal nuclease domain-containing protein 1 (878 aa).

TNase-like domains lie at 3-142 and 167-312; these read QYVS…IWGP and KKLN…IWKN. Residue Ser-316 is modified to Phosphoserine. TNase-like domains lie at 326–464 and 493–626; these read KDYS…MWSG and RKLS…MWHD. In terms of domain architecture, Tudor spans 695 to 755; the sequence is KINVGMNVAA…SSLPDTYTKL (61 aa).

Its subcellular location is the cytoplasm. It is found in the cytosol. This chain is Staphylococcal nuclease domain-containing protein 1, found in Schizosaccharomyces pombe (strain 972 / ATCC 24843) (Fission yeast).